The sequence spans 507 residues: MLLHDVAITSMDVAATSSRLTKVARIAALLHRAAPDTQLVTIIVSWLSGELPQRHIGVGWAALRSLPPPAPQPALTVTGVDATLSKIGTLPGKGSQAQRAALVAELFSAATEAEQTFLLRLLGGELRQGAKGGIMADAVAQAAGLPAATVQRAAMLGGDLAAAAAAGLSGAALDTFTLRVGRPIGPMLAQTATSVHDALERHGGTTIFEAKLDGARVQIHRANDQVRIYTRSLDDVTARLPEVVEATLALPVRDLVADGEAIALCPDNRPQRFQVTASRFGRSVDVAAARATQPLSVFFFDILHRDGTDLLEAPTTERLAALDALVPARHRVDRLITSDPTDAANFLDATLAAGHEGVMAKAPAARYLAGRRGAGWLKVKPVHTLDLVVLAVEWGSGRRRGKLSNIHLGARDPATGGFVMVGKTFKGMTDAMLDWQTTRFHEIAVGPTDGYVVQLRPEQVVEVALDGVQRSSRYPGGLALRFARVVRYRADKDPAEADTIDAVRALY.

The segment at 1–172 (MLLHDVAITS…AAAAGLSGAA (172 aa)) is not required for adenylyltransferase activity, required for nick joining. Glu-209 contributes to the ATP binding site. Residue Lys-211 is the N6-AMP-lysine intermediate of the active site. Residues Arg-216, Arg-231, Glu-260, Phe-300, Arg-372, and Lys-378 each coordinate ATP.

It belongs to the ATP-dependent DNA ligase family. As to quaternary structure, monomer. The cofactor is Mg(2+).

The catalysed reaction is ATP + (deoxyribonucleotide)n-3'-hydroxyl + 5'-phospho-(deoxyribonucleotide)m = (deoxyribonucleotide)n+m + AMP + diphosphate.. DNA ligase that seals nicks in double-stranded DNA during DNA replication, DNA recombination and DNA repair. The polypeptide is DNA ligase B (ligB) (Mycobacterium tuberculosis (strain ATCC 25618 / H37Rv)).